An 874-amino-acid polypeptide reads, in one-letter code: Lon protease (874 aa).

In terms of domain architecture, Lon N-terminal spans 18–261 (LPVLPLDDAV…RLLTWTKEHL (244 aa)). Disordered stretches follow at residues 47 to 68 (VDAARTGGSAGSSDARAPGISS), 120 to 144 (GGVRPAPAGTDTTGTGTADATSGAG), and 298 to 318 (LSELDGSGGGADGASGSEPAD). The span at 124–142 (PAPAGTDTTGTGTADATSG) shows a compositional bias: low complexity. 430–437 (GPPGVGKT) is a binding site for ATP. A Lon proteolytic domain is found at 667-851 (TALPGVATGL…REVLDLALEP (185 aa)). Catalysis depends on residues S757 and K800. The disordered stretch occupies residues 853–874 (FDADHGGRSPGRAGHSPTALAA).

It belongs to the peptidase S16 family. In terms of assembly, homohexamer. Organized in a ring with a central cavity.

It localises to the cytoplasm. It catalyses the reaction Hydrolysis of proteins in presence of ATP.. Functionally, ATP-dependent serine protease that mediates the selective degradation of mutant and abnormal proteins as well as certain short-lived regulatory proteins. Required for cellular homeostasis and for survival from DNA damage and developmental changes induced by stress. Degrades polypeptides processively to yield small peptide fragments that are 5 to 10 amino acids long. Binds to DNA in a double-stranded, site-specific manner. The protein is Lon protease of Frankia alni (strain DSM 45986 / CECT 9034 / ACN14a).